A 119-amino-acid chain; its full sequence is Large ribosomal subunit protein bL20c (119 aa).

The protein belongs to the bacterial ribosomal protein bL20 family.

Its subcellular location is the plastid. The protein resides in the chloroplast. Binds directly to 23S ribosomal RNA and is necessary for the in vitro assembly process of the 50S ribosomal subunit. It is not involved in the protein synthesizing functions of that subunit. The chain is Large ribosomal subunit protein bL20c from Triticum aestivum (Wheat).